Consider the following 307-residue polypeptide: tRNA dimethylallyltransferase 2 (307 aa).

G9 to T16 is an ATP binding site. T11–T16 is a substrate binding site. The segment at D34–Q37 is interaction with substrate tRNA.

This sequence belongs to the IPP transferase family. In terms of assembly, monomer. It depends on Mg(2+) as a cofactor.

The enzyme catalyses adenosine(37) in tRNA + dimethylallyl diphosphate = N(6)-dimethylallyladenosine(37) in tRNA + diphosphate. Functionally, catalyzes the transfer of a dimethylallyl group onto the adenine at position 37 in tRNAs that read codons beginning with uridine, leading to the formation of N6-(dimethylallyl)adenosine (i(6)A). The chain is tRNA dimethylallyltransferase 2 from Azobacteroides pseudotrichonymphae genomovar. CFP2.